A 343-amino-acid polypeptide reads, in one-letter code: Dihydroorotase (343 aa).

Residues His14 and His16 each contribute to the Zn(2+) site. Substrate-binding positions include 16-18 and Asn42; that span reads HVR. Lys98, His135, and His173 together coordinate Zn(2+). Lys98 bears the N6-carboxylysine mark. Residue His135 coordinates substrate. Residue Leu219 coordinates substrate. Asp247 serves as a coordination point for Zn(2+). The active site involves Asp247. Substrate contacts are provided by His251 and Ala263.

Belongs to the metallo-dependent hydrolases superfamily. DHOase family. Class II DHOase subfamily. Homodimer. Zn(2+) is required as a cofactor.

The catalysed reaction is (S)-dihydroorotate + H2O = N-carbamoyl-L-aspartate + H(+). It functions in the pathway pyrimidine metabolism; UMP biosynthesis via de novo pathway; (S)-dihydroorotate from bicarbonate: step 3/3. Its function is as follows. Catalyzes the reversible cyclization of carbamoyl aspartate to dihydroorotate. The chain is Dihydroorotase from Marinobacter nauticus (strain ATCC 700491 / DSM 11845 / VT8) (Marinobacter aquaeolei).